The sequence spans 338 residues: Fe-S cluster assembly protein DRE2 (338 aa).

The tract at residues 1 to 165 is N-terminal SAM-like domain; sequence MAKSGLLLIH…LPSFKKAANK (165 aa). The tract at residues 166–232 is linker; sequence PLPTFKKKVE…DDLLNEEDAK (67 aa). Residues 181–223 form a disordered region; the sequence is VEARVHKAENDDDELEDEEDENLFDASRSKYFDEDDSESLDED. Composition is skewed to acidic residues over residues 190-203 and 213-223; these read NDDDELEDEEDENL and DEDDSESLDED. [2Fe-2S] cluster contacts are provided by Cys242, Cys253, Cys256, and Cys258. Residues 242 to 258 form a fe-S binding site A region; it reads CGKSKTKKKKACKDCSC. Cys301, Cys304, Cys312, and Cys315 together coordinate [4Fe-4S] cluster. Short sequence motifs (cx2C motif) lie at residues 301–304 and 312–315; these read CGSC and CTGC. The tract at residues 301–315 is fe-S binding site B; sequence CGSCSLGDAFRCTGC.

This sequence belongs to the anamorsin family. In terms of assembly, monomer. Interacts with TAH18. Interacts with MIA40. [2Fe-2S] cluster is required as a cofactor. Requires [4Fe-4S] cluster as cofactor.

It localises to the cytoplasm. The protein resides in the mitochondrion intermembrane space. Its function is as follows. Component of the cytosolic iron-sulfur (Fe-S) protein assembly (CIA) machinery required for the maturation of extramitochondrial Fe-S proteins. Part of an electron transfer chain functioning in an early step of cytosolic Fe-S biogenesis, facilitating the de novo assembly of a [4Fe-4S] cluster on the scaffold complex CFD1-NBP35. Electrons are transferred to DRE2 from NADPH via the FAD- and FMN-containing protein TAH18. TAH18-DRE2 are also required for the assembly of the diferric tyrosyl radical cofactor of ribonucleotide reductase (RNR), probably by providing electrons for reduction during radical cofactor maturation in the catalytic small subunit RNR2. The sequence is that of Fe-S cluster assembly protein DRE2 from Candida glabrata (strain ATCC 2001 / BCRC 20586 / JCM 3761 / NBRC 0622 / NRRL Y-65 / CBS 138) (Yeast).